We begin with the raw amino-acid sequence, 273 residues long: 2,3,4,5-tetrahydropyridine-2,6-dicarboxylate N-succinyltransferase (273 aa).

Arg104 and Asp141 together coordinate substrate.

This sequence belongs to the transferase hexapeptide repeat family. In terms of assembly, homotrimer.

It is found in the cytoplasm. The catalysed reaction is (S)-2,3,4,5-tetrahydrodipicolinate + succinyl-CoA + H2O = (S)-2-succinylamino-6-oxoheptanedioate + CoA. It participates in amino-acid biosynthesis; L-lysine biosynthesis via DAP pathway; LL-2,6-diaminopimelate from (S)-tetrahydrodipicolinate (succinylase route): step 1/3. The sequence is that of 2,3,4,5-tetrahydropyridine-2,6-dicarboxylate N-succinyltransferase from Azoarcus sp. (strain BH72).